Consider the following 61-residue polypeptide: DNA-directed RNA polymerase subunit Rpo6 (61 aa).

It belongs to the archaeal Rpo6/eukaryotic RPB6 RNA polymerase subunit family. Part of the RNA polymerase complex.

It localises to the cytoplasm. The enzyme catalyses RNA(n) + a ribonucleoside 5'-triphosphate = RNA(n+1) + diphosphate. In terms of biological role, DNA-dependent RNA polymerase (RNAP) catalyzes the transcription of DNA into RNA using the four ribonucleoside triphosphates as substrates. This is DNA-directed RNA polymerase subunit Rpo6 from Thermoplasma volcanium (strain ATCC 51530 / DSM 4299 / JCM 9571 / NBRC 15438 / GSS1).